The following is a 704-amino-acid chain: E3 ubiquitin-protein ligase MBR1 (704 aa).

Disordered regions lie at residues 1 to 20 (MNPM…VNQV), 37 to 61 (NPAD…SSSH), 176 to 197 (SSLG…SPFG), 245 to 354 (LSLA…GENQ), 381 to 403 (SNPS…PRSN), and 436 to 525 (SLFV…RHRR). Positions 43-61 (FPNNSTPSGRPTYASSSSH) are enriched in polar residues. Low complexity-rich tracts occupy residues 184–196 (AAGE…ASPF) and 245–255 (LSLATPSQSSP). 3 stretches are compositionally biased toward polar residues: residues 281 to 290 (FHSTRNTDTL), 300 to 329 (RQPQ…NLPL), and 340 to 354 (RSSS…GENQ). The span at 452–467 (QPNPTWIPPQNAPPHN) shows a compositional bias: pro residues. Residues 485-505 (SPSASHGGPLPLLPAGPSVSS) are compositionally biased toward low complexity. The RING-type; atypical zinc-finger motif lies at 656 to 697 (CCICQEEYVEGDNLGTLKCGHEFHKDCIKQWVMIKNLCPICK).

The protein belongs to the RING-type zinc finger family. As to quaternary structure, interacts with MED25 and UBC11.

The enzyme catalyses S-ubiquitinyl-[E2 ubiquitin-conjugating enzyme]-L-cysteine + [acceptor protein]-L-lysine = [E2 ubiquitin-conjugating enzyme]-L-cysteine + N(6)-ubiquitinyl-[acceptor protein]-L-lysine.. It functions in the pathway protein modification; protein ubiquitination. Functionally, E3 ubiquitin-protein ligase that functions as a regulator of MED25 stability by targeting MED25 for degradation in a RING-H2-dependent way. Proteasome-dependent degradation of MED25 seems to activate its function as positive regulator of FLOWERING LOCUS T (FT) and is important to induce the expression of FT and consequently to promote flowering. This Arabidopsis thaliana (Mouse-ear cress) protein is E3 ubiquitin-protein ligase MBR1 (MBR1).